A 174-amino-acid chain; its full sequence is ATP synthase subunit b (174 aa).

A helical membrane pass occupies residues 9–29 (LPNTSLIFWEVVTFLILLALL).

Belongs to the ATPase B chain family. In terms of assembly, F-type ATPases have 2 components, F(1) - the catalytic core - and F(0) - the membrane proton channel. F(1) has five subunits: alpha(3), beta(3), gamma(1), delta(1), epsilon(1). F(0) has three main subunits: a(1), b(2) and c(10-14). The alpha and beta chains form an alternating ring which encloses part of the gamma chain. F(1) is attached to F(0) by a central stalk formed by the gamma and epsilon chains, while a peripheral stalk is formed by the delta and b chains.

It is found in the cell membrane. In terms of biological role, f(1)F(0) ATP synthase produces ATP from ADP in the presence of a proton or sodium gradient. F-type ATPases consist of two structural domains, F(1) containing the extramembraneous catalytic core and F(0) containing the membrane proton channel, linked together by a central stalk and a peripheral stalk. During catalysis, ATP synthesis in the catalytic domain of F(1) is coupled via a rotary mechanism of the central stalk subunits to proton translocation. Functionally, component of the F(0) channel, it forms part of the peripheral stalk, linking F(1) to F(0). In Rubrobacter xylanophilus (strain DSM 9941 / JCM 11954 / NBRC 16129 / PRD-1), this protein is ATP synthase subunit b.